We begin with the raw amino-acid sequence, 201 residues long: Probable molybdenum cofactor guanylyltransferase (201 aa).

GTP is bound by residues 6 to 8 (LAG), lysine 18, aspartate 67, and aspartate 92. Aspartate 92 contributes to the Mg(2+) binding site.

Belongs to the MobA family. Mg(2+) serves as cofactor.

It is found in the cytoplasm. It carries out the reaction Mo-molybdopterin + GTP + H(+) = Mo-molybdopterin guanine dinucleotide + diphosphate. Its function is as follows. Transfers a GMP moiety from GTP to Mo-molybdopterin (Mo-MPT) cofactor (Moco or molybdenum cofactor) to form Mo-molybdopterin guanine dinucleotide (Mo-MGD) cofactor. This is Probable molybdenum cofactor guanylyltransferase from Thermococcus kodakarensis (strain ATCC BAA-918 / JCM 12380 / KOD1) (Pyrococcus kodakaraensis (strain KOD1)).